The sequence spans 211 residues: Methylated-DNA--protein-cysteine methyltransferase (211 aa).

Zn(2+) is bound at residue C5. A Phosphoserine modification is found at S14. Zn(2+) is bound by residues C24 and H29. The disordered stretch occupies residues 35–57; it reads SGKTPNTDPTEAPATPEVLGGPE. Residue H89 coordinates Zn(2+). DNA-binding residues include T99, Y118, Q119, N127, and R132. Catalysis depends on C149, which acts as the Nucleophile; methyl group acceptor. DNA is bound at residue S155. Phosphoserine is present on S205.

This sequence belongs to the MGMT family. It depends on Zn(2+) as a cofactor.

It is found in the nucleus. It catalyses the reaction a 6-O-methyl-2'-deoxyguanosine in DNA + L-cysteinyl-[protein] = S-methyl-L-cysteinyl-[protein] + a 2'-deoxyguanosine in DNA. The catalysed reaction is a 4-O-methyl-thymidine in DNA + L-cysteinyl-[protein] = a thymidine in DNA + S-methyl-L-cysteinyl-[protein]. Its function is as follows. Involved in the cellular defense against the biological effects of O6-methylguanine (O6-MeG) and O4-methylthymine (O4-MeT) in DNA. Repairs the methylated nucleobase in DNA by stoichiometrically transferring the methyl group to a cysteine residue in the enzyme. This is a suicide reaction: the enzyme is irreversibly inactivated. The polypeptide is Methylated-DNA--protein-cysteine methyltransferase (Mgmt) (Mus musculus (Mouse)).